Reading from the N-terminus, the 201-residue chain is Recombination protein RecR (201 aa).

Residues 57-72 form a C4-type zinc finger; it reads CTHCRTFTEEESCAIC. The Toprim domain maps to 81-176; sequence GFLCVVEQPS…KVSRIAHGIP (96 aa).

This sequence belongs to the RecR family.

Functionally, may play a role in DNA repair. It seems to be involved in an RecBC-independent recombinational process of DNA repair. It may act with RecF and RecO. This is Recombination protein RecR from Histophilus somni (strain 2336) (Haemophilus somnus).